A 102-amino-acid chain; its full sequence is ATP-dependent Clp protease adapter protein ClpS (102 aa).

This sequence belongs to the ClpS family. Binds to the N-terminal domain of the chaperone ClpA.

Functionally, involved in the modulation of the specificity of the ClpAP-mediated ATP-dependent protein degradation. This chain is ATP-dependent Clp protease adapter protein ClpS, found in Shewanella sp. (strain ANA-3).